Consider the following 642-residue polypeptide: Sodium-dependent phosphate transport protein 2A (642 aa).

Residues 1 to 106 (MISYGEQLSS…LRRTAMTLLK (106 aa)) are Cytoplasmic-facing. A phosphoserine mark is found at serine 14 and serine 37. A helical transmembrane segment spans residues 107–128 (LPLMVTFLYLFVCSLDVLSSAF). The Extracellular segment spans residues 129–148 (QLAGGKVAGDIFKDNAILAN). Residues 149-166 (PVAGLVVGILVTVLVQSS) form a helical membrane-spanning segment. Topologically, residues 167-168 (ST) are cytoplasmic. Residues 169 to 188 (ATSIIVSMVSSGLLEVSSAI) form a helical membrane-spanning segment. The Extracellular segment spans residues 189-350 (PIIMGSNIGT…HIFVDTQLPD (162 aa)). Disulfide bonds link cysteine 228–cysteine 525 and cysteine 309–cysteine 339. N-linked (GlcNAc...) asparagine glycans are attached at residues asparagine 301, asparagine 326, and asparagine 333. The chain crosses the membrane as a helical span at residues 351–373 (LAVGLILLAGSLVLLCTCLILLV). Residues 374–415 (KMLNSLLKGQVAKVIQKVINTDLPAPFTWVTGYFAMVVGAAM) lie on the Cytoplasmic side of the membrane. The chain crosses the membrane as a helical span at residues 416 to 439 (TFIVQSSSVFTSAITPLVGLGVIS). The Extracellular portion of the chain corresponds to 440-469 (IERAYPLTLGSNIGTTTTAILAALASPREK). Residues 470–490 (LSSSFQIALCHFFFNISGILL) form a helical membrane-spanning segment. Topologically, residues 491-516 (WYPLPCTRLPIRMAKALGKRTAKYRW) are cytoplasmic. Phosphothreonine; by PKC is present on threonine 511. Residues 517–537 (FAVLYLLVCFLLLPSLVFGIS) form a helical membrane-spanning segment. Residues 538–542 (MAGWR) are Extracellular-facing. Residues 543–564 (AMVGVGAPFGALLAFVVLINVL) traverse the membrane as a helical segment. The Cytoplasmic portion of the chain corresponds to 565-642 (QSRSPGRLPK…LPAHHNATRL (78 aa)). Position 610 is a phosphoserine (serine 610). Threonine 626 bears the Phosphothreonine mark. Serine 628 is subject to Phosphoserine.

Belongs to the SLC34A transporter family. Interacts via its C-terminal region with NHERF4. Interacts with NHERF1. Interacts with TMEM174; regulates SLC34A1 internalization by PTH and FGF23. Expressed in the kidney cortex.

It localises to the apical cell membrane. Its subcellular location is the cell membrane. It catalyses the reaction 3 Na(+)(out) + phosphate(out) = 3 Na(+)(in) + phosphate(in). Its activity is regulated as follows. Transport activity is significantly increased in response to dietary phosphate deprivation. Involved in actively transporting phosphate into cells via Na(+) cotransport in the renal brush border membrane. The cotransport has a Na(+):Pi stoichiometry of 3:1 and is electrogenic. The chain is Sodium-dependent phosphate transport protein 2A from Oryctolagus cuniculus (Rabbit).